The following is a 470-amino-acid chain: Protein nucleotidyltransferase YdiU (470 aa).

Positions 86, 88, 89, 109, 121, 122, 172, and 179 each coordinate ATP. The active-site Proton acceptor is the Asp244. The Mg(2+) site is built by Asn245 and Asp254. Asp254 is an ATP binding site.

It belongs to the SELO family. The cofactor is Mg(2+). Requires Mn(2+) as cofactor.

The enzyme catalyses L-seryl-[protein] + ATP = 3-O-(5'-adenylyl)-L-seryl-[protein] + diphosphate. The catalysed reaction is L-threonyl-[protein] + ATP = 3-O-(5'-adenylyl)-L-threonyl-[protein] + diphosphate. It carries out the reaction L-tyrosyl-[protein] + ATP = O-(5'-adenylyl)-L-tyrosyl-[protein] + diphosphate. It catalyses the reaction L-histidyl-[protein] + UTP = N(tele)-(5'-uridylyl)-L-histidyl-[protein] + diphosphate. The enzyme catalyses L-seryl-[protein] + UTP = O-(5'-uridylyl)-L-seryl-[protein] + diphosphate. The catalysed reaction is L-tyrosyl-[protein] + UTP = O-(5'-uridylyl)-L-tyrosyl-[protein] + diphosphate. Functionally, nucleotidyltransferase involved in the post-translational modification of proteins. It can catalyze the addition of adenosine monophosphate (AMP) or uridine monophosphate (UMP) to a protein, resulting in modifications known as AMPylation and UMPylation. In Roseobacter denitrificans (strain ATCC 33942 / OCh 114) (Erythrobacter sp. (strain OCh 114)), this protein is Protein nucleotidyltransferase YdiU.